Reading from the N-terminus, the 492-residue chain is Ketol-acid reductoisomerase (NADP(+)) (492 aa).

Positions 14–208 constitute a KARI N-terminal Rossmann domain; the sequence is LDQLGKCRFM…GGHRAGVLQS (195 aa). Residues 45-48, arginine 68, arginine 76, serine 78, and 108-110 contribute to the NADP(+) site; these read CGAQ and DKQ. Residue histidine 132 is part of the active site. Glycine 158 provides a ligand contact to NADP(+). KARI C-terminal knotted domains lie at 209–344 and 345–485; these read SFVA…NAPQ and FDGK…MKDM. Residues aspartate 217, glutamate 221, glutamate 389, and glutamate 393 each contribute to the Mg(2+) site. A substrate-binding site is contributed by serine 414.

The protein belongs to the ketol-acid reductoisomerase family. Mg(2+) serves as cofactor.

It carries out the reaction (2R)-2,3-dihydroxy-3-methylbutanoate + NADP(+) = (2S)-2-acetolactate + NADPH + H(+). The enzyme catalyses (2R,3R)-2,3-dihydroxy-3-methylpentanoate + NADP(+) = (S)-2-ethyl-2-hydroxy-3-oxobutanoate + NADPH + H(+). It participates in amino-acid biosynthesis; L-isoleucine biosynthesis; L-isoleucine from 2-oxobutanoate: step 2/4. It functions in the pathway amino-acid biosynthesis; L-valine biosynthesis; L-valine from pyruvate: step 2/4. In terms of biological role, involved in the biosynthesis of branched-chain amino acids (BCAA). Catalyzes an alkyl-migration followed by a ketol-acid reduction of (S)-2-acetolactate (S2AL) to yield (R)-2,3-dihydroxy-isovalerate. In the isomerase reaction, S2AL is rearranged via a Mg-dependent methyl migration to produce 3-hydroxy-3-methyl-2-ketobutyrate (HMKB). In the reductase reaction, this 2-ketoacid undergoes a metal-dependent reduction by NADPH to yield (R)-2,3-dihydroxy-isovalerate. This chain is Ketol-acid reductoisomerase (NADP(+)), found in Pectobacterium atrosepticum (strain SCRI 1043 / ATCC BAA-672) (Erwinia carotovora subsp. atroseptica).